Reading from the N-terminus, the 175-residue chain is ATP synthase subunit b (175 aa).

Residues 18–38 (VTSWEPFVANLIAFILMVVIL) form a helical membrane-spanning segment.

Belongs to the ATPase B chain family. F-type ATPases have 2 components, F(1) - the catalytic core - and F(0) - the membrane proton channel. F(1) has five subunits: alpha(3), beta(3), gamma(1), delta(1), epsilon(1). F(0) has three main subunits: a(1), b(2) and c(10-14). The alpha and beta chains form an alternating ring which encloses part of the gamma chain. F(1) is attached to F(0) by a central stalk formed by the gamma and epsilon chains, while a peripheral stalk is formed by the delta and b chains.

The protein resides in the cell inner membrane. In terms of biological role, f(1)F(0) ATP synthase produces ATP from ADP in the presence of a proton or sodium gradient. F-type ATPases consist of two structural domains, F(1) containing the extramembraneous catalytic core and F(0) containing the membrane proton channel, linked together by a central stalk and a peripheral stalk. During catalysis, ATP synthesis in the catalytic domain of F(1) is coupled via a rotary mechanism of the central stalk subunits to proton translocation. Its function is as follows. Component of the F(0) channel, it forms part of the peripheral stalk, linking F(1) to F(0). In Akkermansia muciniphila (strain ATCC BAA-835 / DSM 22959 / JCM 33894 / BCRC 81048 / CCUG 64013 / CIP 107961 / Muc), this protein is ATP synthase subunit b.